We begin with the raw amino-acid sequence, 407 residues long: RNA-binding motif, single-stranded-interacting protein 2 (407 aa).

Met-1 bears the N-acetylmethionine mark. Residues Gln-29–Ser-54 form a disordered region. The segment covering Ser-37–Asn-50 has biased composition (low complexity). 2 consecutive RRM domains span residues Thr-56–Gln-129 and Thr-135–Gly-220. Ser-106 carries the phosphoserine modification. Thr-269 is subject to Phosphothreonine. Phosphoserine occurs at positions 280 and 285.

It is found in the nucleus. The chain is RNA-binding motif, single-stranded-interacting protein 2 (RBMS2) from Homo sapiens (Human).